The sequence spans 376 residues: Putative E3 ubiquitin-protein ligase XBAT34 (376 aa).

ANK repeat units lie at residues 41-71 and 77-106; these read LGRTPLILACTNDDLYDVAKTLLELGSNVNA and NGGTPLHHAAKRGLVHTVKLLLSHGANPLV. Residues 325–364 form an RING-type zinc finger; the sequence is CVICVDAPSEAVCVPCGHVAGCISCLKEIENKKMGCPVCR.

It carries out the reaction S-ubiquitinyl-[E2 ubiquitin-conjugating enzyme]-L-cysteine + [acceptor protein]-L-lysine = [E2 ubiquitin-conjugating enzyme]-L-cysteine + N(6)-ubiquitinyl-[acceptor protein]-L-lysine.. It participates in protein modification; protein ubiquitination. No E3 ubiquitin-protein ligase activity observed when associated with the E2 enzyme UBC8 in vitro. This chain is Putative E3 ubiquitin-protein ligase XBAT34 (XBAT34), found in Arabidopsis thaliana (Mouse-ear cress).